The following is a 436-amino-acid chain: Eukaryotic peptide chain release factor subunit 1 (436 aa).

Belongs to the eukaryotic release factor 1 family. In terms of assembly, heterodimer of two subunits, one of which binds GTP.

The protein localises to the cytoplasm. Its function is as follows. Directs the termination of nascent peptide synthesis (translation) in response to the termination codons UAA and possibly also UAG and UGA. The protein is Eukaryotic peptide chain release factor subunit 1 (eRF1) of Dileptus margaritifer (Ciliate).